The sequence spans 775 residues: DNA polymerase (775 aa).

This sequence belongs to the DNA polymerase type-B family. In terms of assembly, monomer.

The enzyme catalyses DNA(n) + a 2'-deoxyribonucleoside 5'-triphosphate = DNA(n+1) + diphosphate. Its function is as follows. In addition to polymerase activity, this DNA polymerase exhibits 3' to 5' exonuclease activity. The protein is DNA polymerase (pol) of Pyrococcus glycovorans.